The sequence spans 610 residues: MDTPRGIGTFVVWDYVVFAGMLVISAAIGIYYAFAGGGQQTSKDFLMGGRRMTAVPVALSLTASFMSAVTVLGTPSEVYRFGAIFSIFAFTYFFVVVISAEVFLPVFYKLGITSTYEYLELRFNKCVRLCGTVLFIVQTILYTGIVIYAPALALNQVTGFDLWGAVVATGVVCTFYCTLGGLKAVIWTDVFQVGIMVAGFASVIIQAVVMQGGISTILNDAYDGGRLNFWNFNPNPLQRHTFWTIIIGGTFTWTSIYGVNQSQVQRYISCKSRFQAKLSLYINLVGLWAILTCSVFCGLALYSRYHDCDPWTAKKVSAPDQLMPYLVLDILQDYPGLPGLFVACAYSGTLSTVSSSINALAAVTVEDLIKPYFRSLSERSLSWISQGMSVVYGALCIGMAALASLMGALLQAALSVFGMVGGPLMGLFALGILVPFANSIGALVGLMAGFAISLWVGIGAQIYPPLPERTLPLHLDIQGCNSTYNETNLMTTTEMPFTTSVFQIYNVQRTPLMDNWYSLSYLYFSTVGTLVTLLVGILVSLSTGGRKQNLDPRYILTKEDFLSNFDIFKKKKHVLSYKSHPVEDGGTDNPAFNHIELNSDQSGKSNGTRL.

Topologically, residues 1-9 are extracellular; the sequence is MDTPRGIGT. Residues 10–30 form a helical membrane-spanning segment; sequence FVVWDYVVFAGMLVISAAIGI. The Cytoplasmic segment spans residues 31–51; the sequence is YYAFAGGGQQTSKDFLMGGRR. Residues 52–72 form a helical membrane-spanning segment; it reads MTAVPVALSLTASFMSAVTVL. Residues 73–83 lie on the Extracellular side of the membrane; sequence GTPSEVYRFGA. The helical transmembrane segment at 84–104 threads the bilayer; that stretch reads IFSIFAFTYFFVVVISAEVFL. Topologically, residues 105 to 132 are cytoplasmic; that stretch reads PVFYKLGITSTYEYLELRFNKCVRLCGT. Residues 133 to 153 traverse the membrane as a helical segment; that stretch reads VLFIVQTILYTGIVIYAPALA. Topologically, residues 154–161 are extracellular; it reads LNQVTGFD. Residues 162-182 traverse the membrane as a helical segment; sequence LWGAVVATGVVCTFYCTLGGL. Topologically, residues 183-189 are cytoplasmic; that stretch reads KAVIWTD. Residues 190 to 210 traverse the membrane as a helical segment; that stretch reads VFQVGIMVAGFASVIIQAVVM. The Extracellular portion of the chain corresponds to 211–239; the sequence is QGGISTILNDAYDGGRLNFWNFNPNPLQR. Residues 240 to 260 traverse the membrane as a helical segment; it reads HTFWTIIIGGTFTWTSIYGVN. At 261–279 the chain is on the cytoplasmic side; it reads QSQVQRYISCKSRFQAKLS. The chain crosses the membrane as a helical span at residues 280 to 300; the sequence is LYINLVGLWAILTCSVFCGLA. Residues 301-336 lie on the Extracellular side of the membrane; sequence LYSRYHDCDPWTAKKVSAPDQLMPYLVLDILQDYPG. The helical transmembrane segment at 337 to 359 threads the bilayer; the sequence is LPGLFVACAYSGTLSTVSSSINA. Residues 360–389 lie on the Cytoplasmic side of the membrane; the sequence is LAAVTVEDLIKPYFRSLSERSLSWISQGMS. A helical transmembrane segment spans residues 390-410; sequence VVYGALCIGMAALASLMGALL. At 411–415 the chain is on the extracellular side; sequence QAALS. A helical membrane pass occupies residues 416–436; it reads VFGMVGGPLMGLFALGILVPF. Residues 437–439 are Cytoplasmic-facing; it reads ANS. Residues 440-460 form a helical membrane-spanning segment; it reads IGALVGLMAGFAISLWVGIGA. Over 461 to 518 the chain is Extracellular; that stretch reads QIYPPLPERTLPLHLDIQGCNSTYNETNLMTTTEMPFTTSVFQIYNVQRTPLMDNWYS. Residue Asn-485 is glycosylated (N-linked (GlcNAc...) asparagine). Residues 519 to 539 traverse the membrane as a helical segment; that stretch reads LSYLYFSTVGTLVTLLVGILV. The Cytoplasmic segment spans residues 540 to 610; sequence SLSTGGRKQN…QSGKSNGTRL (71 aa). The tract at residues 585 to 610 is disordered; sequence GGTDNPAFNHIELNSDQSGKSNGTRL. A compositionally biased stretch (polar residues) spans 596–610; the sequence is ELNSDQSGKSNGTRL. Positions 608 to 610 match the PDZ-binding motif; sequence TRL.

Belongs to the sodium:solute symporter (SSF) (TC 2.A.21) family. In terms of assembly, interacts (via PDZ-binding motif) with PDZK1 (via PDZ domains 1 and 3); interaction increases nicotinate transport activity of SLC5A8. As to expression, expressed in normal thyroid, localized at the apical pole of thyroid cells facing the colloid lumen, but expression profoundly decreased in thyroid carcinomas. Expressed in normal colon but absent in colon aberrant crypt foci and colon cancers. Present in normal kidney cortex, brain, prostate, gastric mucosa and breast tissue but was significantly down-regulated in primary gliomas, gastric cancer, prostate tumors and breast tumors.

The protein localises to the apical cell membrane. The catalysed reaction is (S)-lactate(out) + 2 Na(+)(out) = (S)-lactate(in) + 2 Na(+)(in). It carries out the reaction propanoate(out) + 2 Na(+)(out) = propanoate(in) + 2 Na(+)(in). It catalyses the reaction pyruvate(out) + 2 Na(+)(out) = pyruvate(in) + 2 Na(+)(in). The enzyme catalyses acetate(out) + 2 Na(+)(out) = acetate(in) + 2 Na(+)(in). The catalysed reaction is butanoate(out) + 2 Na(+)(out) = butanoate(in) + 2 Na(+)(in). It carries out the reaction nicotinate(out) + 2 Na(+)(out) = nicotinate(in) + 2 Na(+)(in). It catalyses the reaction (R)-3-hydroxybutanoate(out) + 2 Na(+)(out) = (R)-3-hydroxybutanoate(in) + 2 Na(+)(in). The enzyme catalyses acetoacetate(out) + 2 Na(+)(out) = acetoacetate(in) + 2 Na(+)(in). The catalysed reaction is 4-methyl-2-oxopentanoate(out) + 2 Na(+)(out) = 4-methyl-2-oxopentanoate(in) + 2 Na(+)(in). It carries out the reaction 5-oxo-L-proline(out) + 2 Na(+)(out) = 5-oxo-L-proline(in) + 2 Na(+)(in). It catalyses the reaction iodide(out) = iodide(in). The enzyme catalyses chloride(in) = chloride(out). The catalysed reaction is nitrate(in) = nitrate(out). It carries out the reaction bromide(in) = bromide(out). With respect to regulation, increase of iodide influx inhibited by addition of perchlorate (NaClO(4)), a competitive inhibitor of iodide uptake catalyzed by sodium iodide symporter (NIS). Cotransport of monocarboxylates and nicotinate strongly inhibited by probenecid, nonsteroid anti-inflammatory drugs (ibuprofen, fenoprofen, ketprofen, naproxen) in a Na(+)-dependent manner or by prolonged exposure to external concentrations of monocarboxylates. Its function is as follows. Acts as an electrogenic sodium (Na(+)) and chloride (Cl-)-dependent sodium-coupled solute transporter, including transport of monocarboxylates (short-chain fatty acids including L-lactate, D-lactate, pyruvate, acetate, propionate, valerate and butyrate), mocarboxylate drugs (nicotinate, benzoate, salicylate and 5-aminosalicylate) and ketone bodies (beta-D-hydroxybutyrate, acetoacetate and alpha-ketoisocaproate), with a Na(+):substrate stoichiometry of between 4:1 and 2:1. Catalyzes passive carrier mediated diffusion of iodide. Mediates iodide transport from the thyrocyte into the colloid lumen through the apical membrane. May be responsible for the absorption of D-lactate and monocarboxylate drugs from the intestinal tract. Acts as a tumor suppressor, suppressing colony formation in colon cancer, prostate cancer and glioma cell lines. May play a critical role in the entry of L-lactate and ketone bodies into neurons by a process driven by an electrochemical Na(+) gradient and hence contribute to the maintenance of the energy status and function of neurons. Mediates sodium-coupled electrogenic transport of pyroglutamate (5-oxo-L-proline). Can mediate the transport of chloride, bromide, iodide and nitrate ions when the external concentration of sodium ions is reduced. The protein is Sodium-coupled monocarboxylate transporter 1 of Homo sapiens (Human).